A 773-amino-acid chain; its full sequence is MPPGAKVPQAEIYKTSNLQGAVPTNSWESSILWNQYSLPIYAHPLTFKFKAEGIEVGKPALGGSGIAYFGAHKNDFTVGHSSVYTFPDARADKISDFAVDAVMASGSGSIKATLMKGSPYAYFVFTGGNPRIDFSGTPTVFYGDSGSQCLGVTINGVNYGLFAPSGSKWQGIGTGTITCILPAGKNYFSIAVLPDNTVSTLTYYKDYAYCFVTDTKVEWSYNETESTLTTTFTAEVSVKEGTNKGTILALYPHQWRNNPHILPLPYTYSTLRGIMKTIQGTSFKTVYRYHGILPNLPDKGTYDREALNRYINELALQADAPVAVDTYWFGKHLGKLSCALPIAEQLGNISAKDRFISFMKSSLEDWFTAKEGETAKLFYYDSNWGTLIGYPSSYGSDEELNDHHFHYGYFLHAAAQIALRDPQWASRDNWGAMVELLIKDIANWDRNDTRFPFLRNFDPYEGHSWASGHAGFADGNNQESSSEAINAWQAIILWGEATGNKTIRDLGIYLYTTEVEAVCNYWFDLYKDIFSPSYGHNYASMVWGGKYCHEIWWNGTNSEKHGINFLPITAASLYLGKDPNYIKQNYEEMLRECGTSQPPNWKDIQYMYYALYDPAAAKNMWNESIVPEDGESKAHTYHWICNLDSLGLPDFSVTADTPLYSVFNKNNIRTYVVYNASSSAKKVTFSDGKVMTVGPHSMAVSTGSESEVLAGDLNGDGKINSTDISLMKRYLLKQIVDLPVEDDIKAADINKDGKVNSTDMSILKRVILRNYPL.

Residues 1–194 form a beta-sandwich subdomain region; sequence MPPGAKVPQA…KNYFSIAVLP (194 aa). The GH81 domain occupies 1–647; sequence MPPGAKVPQA…HWICNLDSLG (647 aa). Residues I31, N34, Q35, Y36, and A89 each coordinate Mg(2+). The tract at residues 195–288 is alpha/beta subdomain; sequence DNTVSTLTYY…QGTSFKTVYR (94 aa). Residues 298 to 647 are (alpha/beta)6 barrel subdomain; that stretch reads DKGTYDREAL…HWICNLDSLG (350 aa). Y327 and K331 together coordinate (1,3-beta-D-glucosyl)n. Positions 365, 368, 373, and 376 each coordinate Ca(2+). D402 and H406 together coordinate (1,3-beta-D-glucosyl)n. The active site involves D402. Ca(2+) contacts are provided by L454, R455, and F457. (1,3-beta-D-glucosyl)n contacts are provided by N477, E479, and E483. Residues E479 and E483 contribute to the active site. K527, K618, N619, and W621 together coordinate Mg(2+). Ca(2+)-binding residues include D712, N714, D716, G717, K718, D723, D748, I749, N750, D752, K754, and D759.

The protein belongs to the glycosyl hydrolase 81 family. Ca(2+) is required as a cofactor. Mg(2+) serves as cofactor.

The protein resides in the secreted. It catalyses the reaction Hydrolysis of (1-&gt;3)-beta-D-glucosidic linkages in (1-&gt;3)-beta-D-glucans.. Its activity is regulated as follows. Inhibited by manganese, zinc, and copper ions. Cleaves internal linkages in 1,3-beta-glucan. May contribute to plant biomass degradation. The chain is Glucan endo-1,3-beta-D-glucosidase from Acetivibrio thermocellus (strain ATCC 27405 / DSM 1237 / JCM 9322 / NBRC 103400 / NCIMB 10682 / NRRL B-4536 / VPI 7372) (Clostridium thermocellum).